We begin with the raw amino-acid sequence, 413 residues long: Putative competence-damage inducible protein (413 aa).

The protein belongs to the CinA family.

This is Putative competence-damage inducible protein from Thermoanaerobacter pseudethanolicus (strain ATCC 33223 / 39E) (Clostridium thermohydrosulfuricum).